We begin with the raw amino-acid sequence, 309 residues long: Taste receptor type 2 member 124 (309 aa).

Residues 1–7 (MVPVLHS) lie on the Extracellular side of the membrane. The helical transmembrane segment at 8 to 28 (LSTIILIAEFVWGNLSNGLIV) threads the bilayer. Topologically, residues 29–46 (LKNCIDWINKKELSTVDQ) are cytoplasmic. The chain crosses the membrane as a helical span at residues 47 to 67 (ILIVLAISRISLIWETLIIWV). At 68–86 (KDQLISSITIEELKIIVFS) the chain is on the extracellular side. A helical membrane pass occupies residues 87 to 107 (FILSSHFSLWLATALSIFYLF). Topologically, residues 108 to 127 (RIPNCYWQIFLYLKWRIKQL) are cytoplasmic. Residues 128–148 (IVHMLLGSLVFLVANMIQITI) form a helical membrane-spanning segment. Over 149–183 (TLEERFYQYGGNTSVNSMETEFSILIELMLFNMTM) the chain is Extracellular. Residues Asn-160 and Asn-180 are each glycosylated (N-linked (GlcNAc...) asparagine). A helical transmembrane segment spans residues 184-204 (FSIIPFSLALISFLLLIFSLW). At 205–230 (KHLQKMPLNSRGDRDPSATAHRNALR) the chain is on the cytoplasmic side. The helical transmembrane segment at 231–251 (ILVSFLLLYTIYFLSLLISWV) threads the bilayer. Residues 252 to 261 (AQKNQSELVH) are Extracellular-facing. The N-linked (GlcNAc...) asparagine glycan is linked to Asn-255. Residues 262–282 (IICMITSLVYPSFHSYILILG) form a helical membrane-spanning segment. Topologically, residues 283–309 (NYKLKQTSLWVMRQLGCRMKRQNTPTT) are cytoplasmic.

This sequence belongs to the G-protein coupled receptor T2R family.

Its subcellular location is the membrane. Putative taste receptor which may play a role in the perception of bitterness. The sequence is that of Taste receptor type 2 member 124 from Mus musculus (Mouse).